The chain runs to 176 residues: Transcription factor 21 (176 aa).

Positions 1-84 (MSTGSISDVD…QVQRNAANAR (84 aa)) are disordered. Residues 31–44 (GTSNESTEDSSNCE) are compositionally biased toward polar residues. The region spanning 76-128 (VQRNAANARERARMRVLSKAFSRLKTTLPWVPPDTKLSKLDTLRLASSYIAHL) is the bHLH domain.

In terms of assembly, efficient DNA binding requires dimerization with another bHLH protein. In terms of tissue distribution, expressed in the cranial paraxial mesoderm from 20 hpf and subsequently becomes restricted to the pharyngeal mesoderm that will form the muscle. Expression in the proepicardial organ is first seen at 40hpf in a cluster of cells between the myocardium and yolk. Also expressed in the developing arches. Expression begins to surround the heart by day 3 of development, and by 96 hpf, expression is restricted to the outer epicardial layer surrounding the myocardium.

The protein resides in the nucleus. Involved in epithelial-mesenchymal interactions in kidney and lung morphogenesis that include epithelial differentiation and branching morphogenesis. The polypeptide is Transcription factor 21 (Danio rerio (Zebrafish)).